Here is a 430-residue protein sequence, read N- to C-terminus: Enolase (430 aa).

A (2R)-2-phosphoglycerate-binding site is contributed by Q163. The Proton donor role is filled by E205. Mg(2+) is bound by residues D242, E285, and D312. Positions 337, 366, 367, and 388 each coordinate (2R)-2-phosphoglycerate. The active-site Proton acceptor is K337.

Belongs to the enolase family. Mg(2+) serves as cofactor.

It is found in the cytoplasm. It localises to the secreted. The protein localises to the cell surface. The enzyme catalyses (2R)-2-phosphoglycerate = phosphoenolpyruvate + H2O. It participates in carbohydrate degradation; glycolysis; pyruvate from D-glyceraldehyde 3-phosphate: step 4/5. Its function is as follows. Catalyzes the reversible conversion of 2-phosphoglycerate (2-PG) into phosphoenolpyruvate (PEP). It is essential for the degradation of carbohydrates via glycolysis. This Rhodopseudomonas palustris (strain BisB18) protein is Enolase.